A 214-amino-acid chain; its full sequence is Outer-membrane lipoprotein LolB (214 aa).

Residues 1–25 form the signal peptide; the sequence is MNNLKRLTKTIFSCFTLSALLLLAG. Cys26 carries the N-palmitoyl cysteine lipid modification. Residue Cys26 is the site of S-diacylglycerol cysteine attachment. Residues 143–160 are compositionally biased toward polar residues; it reads QVIESDSQGKPKQLTNTQ. The segment at 143-163 is disordered; sequence QVIESDSQGKPKQLTNTQTPP.

The protein belongs to the LolB family. As to quaternary structure, monomer.

It localises to the cell outer membrane. Plays a critical role in the incorporation of lipoproteins in the outer membrane after they are released by the LolA protein. The chain is Outer-membrane lipoprotein LolB from Shewanella baltica (strain OS223).